We begin with the raw amino-acid sequence, 377 residues long: Succinyl-diaminopimelate desuccinylase (377 aa).

Position 66 (His66) interacts with Zn(2+). The active site involves Asp68. Asp99 is a binding site for Zn(2+). Glu133 (proton acceptor) is an active-site residue. Zn(2+) is bound by residues Glu134, Glu162, and His348.

Belongs to the peptidase M20A family. DapE subfamily. Homodimer. Zn(2+) serves as cofactor. It depends on Co(2+) as a cofactor.

It catalyses the reaction N-succinyl-(2S,6S)-2,6-diaminopimelate + H2O = (2S,6S)-2,6-diaminopimelate + succinate. Its pathway is amino-acid biosynthesis; L-lysine biosynthesis via DAP pathway; LL-2,6-diaminopimelate from (S)-tetrahydrodipicolinate (succinylase route): step 3/3. Its function is as follows. Catalyzes the hydrolysis of N-succinyl-L,L-diaminopimelic acid (SDAP), forming succinate and LL-2,6-diaminopimelate (DAP), an intermediate involved in the bacterial biosynthesis of lysine and meso-diaminopimelic acid, an essential component of bacterial cell walls. This is Succinyl-diaminopimelate desuccinylase from Marinomonas sp. (strain MWYL1).